The following is a 156-amino-acid chain: MRTFEGSFCGKDLKLAIVVSRFNSFITDELLKGCLDGLSRHDVDSENIDVYYVPGAFEIPLVAKKLAKSKKYNAIIALGAVIRGSTPHFEYVSAEVSKGIANVSLEQEVPVIFGVLTCDTVDQAIERAGTKAGNKGFDAALSALEMANLMKNISES.

Residues F22, 56-58, and 80-82 contribute to the 5-amino-6-(D-ribitylamino)uracil site; these read AFE and AVI. 85-86 is a binding site for (2S)-2-hydroxy-3-oxobutyl phosphate; it reads ST. The Proton donor role is filled by H88. Position 113 (F113) interacts with 5-amino-6-(D-ribitylamino)uracil. R127 is a binding site for (2S)-2-hydroxy-3-oxobutyl phosphate.

The protein belongs to the DMRL synthase family.

The enzyme catalyses (2S)-2-hydroxy-3-oxobutyl phosphate + 5-amino-6-(D-ribitylamino)uracil = 6,7-dimethyl-8-(1-D-ribityl)lumazine + phosphate + 2 H2O + H(+). Its pathway is cofactor biosynthesis; riboflavin biosynthesis; riboflavin from 2-hydroxy-3-oxobutyl phosphate and 5-amino-6-(D-ribitylamino)uracil: step 1/2. Its function is as follows. Catalyzes the formation of 6,7-dimethyl-8-ribityllumazine by condensation of 5-amino-6-(D-ribitylamino)uracil with 3,4-dihydroxy-2-butanone 4-phosphate. This is the penultimate step in the biosynthesis of riboflavin. This is 6,7-dimethyl-8-ribityllumazine synthase from Caldicellulosiruptor saccharolyticus (strain ATCC 43494 / DSM 8903 / Tp8T 6331).